A 473-amino-acid polypeptide reads, in one-letter code: Photosystem II CP43 reaction center protein (473 aa).

The propeptide occupies 1–14 (MKILYSLRRFYHVE). Residue Thr-15 is modified to N-acetylthreonine. A Phosphothreonine modification is found at Thr-15. 5 helical membrane passes run 69–93 (LFEV…PHLA), 134–155 (LLGP…KDRN), 178–200 (KALY…RKIT), 255–275 (KPFA…LSYS), and 291–312 (WFNN…ASQA). Glu-367 is a binding site for [CaMn4O5] cluster. Residues 447 to 471 (RARAAAAGFEKGIDRDLEPVLYMNP) form a helical membrane-spanning segment.

It belongs to the PsbB/PsbC family. PsbC subfamily. In terms of assembly, PSII is composed of 1 copy each of membrane proteins PsbA, PsbB, PsbC, PsbD, PsbE, PsbF, PsbH, PsbI, PsbJ, PsbK, PsbL, PsbM, PsbT, PsbX, PsbY, PsbZ, Psb30/Ycf12, at least 3 peripheral proteins of the oxygen-evolving complex and a large number of cofactors. It forms dimeric complexes. Binds multiple chlorophylls and provides some of the ligands for the Ca-4Mn-5O cluster of the oxygen-evolving complex. It may also provide a ligand for a Cl- that is required for oxygen evolution. PSII binds additional chlorophylls, carotenoids and specific lipids. serves as cofactor. Post-translationally, phosphorylated on threonine residue(s); phosphorylation increases with increasing light levels.

The protein localises to the plastid. It localises to the chloroplast thylakoid membrane. Its function is as follows. One of the components of the core complex of photosystem II (PSII). It binds chlorophyll and helps catalyze the primary light-induced photochemical processes of PSII. PSII is a light-driven water:plastoquinone oxidoreductase, using light energy to abstract electrons from H(2)O, generating O(2) and a proton gradient subsequently used for ATP formation. In Secale cereale (Rye), this protein is Photosystem II CP43 reaction center protein.